Consider the following 32-residue polypeptide: Sodium channel neurotoxin BmK NT2 (32 aa).

The LCN-type CS-alpha/beta domain occupies 2–32; that stretch reads RDAYIAKPENCVYHCAGNEGCNNLCTCNGAT.

In terms of tissue distribution, expressed by the venom gland.

The protein localises to the secreted. Functionally, alpha toxins bind voltage-independently at site-3 of sodium channels (Nav) and inhibit the inactivation of the activated channels, thereby blocking neuronal transmission. This toxin dose-dependently delays inactivation of voltage-gated sodium channels (Nav) (EC(50)=0.91 uM), and shifts the steady-state activation and inactivation to hyperpolarized direction. In addition, it dose-dependently alters calcium dynamics and increases phosphorylation of MAP kinases 1/3 (MAPK1/MAPK3) and cAMP-response element binding (CREB) proteins in neocortical neurons. This effect is eliminated by tetrodotoxin, a Nav blocker. In Olivierus martensii (Manchurian scorpion), this protein is Sodium channel neurotoxin BmK NT2.